Reading from the N-terminus, the 98-residue chain is MPRVTRADVAHLARLSRLALTEAELDRFAGQLDVILDAVAKVSSVAGSDVRPTSHPLPLTNVYRDDEVRPSLPVGEVLAAAPAVEDQRFKVPRILEEE.

This sequence belongs to the GatC family. As to quaternary structure, heterotrimer of A, B and C subunits.

The enzyme catalyses L-glutamyl-tRNA(Gln) + L-glutamine + ATP + H2O = L-glutaminyl-tRNA(Gln) + L-glutamate + ADP + phosphate + H(+). The catalysed reaction is L-aspartyl-tRNA(Asn) + L-glutamine + ATP + H2O = L-asparaginyl-tRNA(Asn) + L-glutamate + ADP + phosphate + 2 H(+). In terms of biological role, allows the formation of correctly charged Asn-tRNA(Asn) or Gln-tRNA(Gln) through the transamidation of misacylated Asp-tRNA(Asn) or Glu-tRNA(Gln) in organisms which lack either or both of asparaginyl-tRNA or glutaminyl-tRNA synthetases. The reaction takes place in the presence of glutamine and ATP through an activated phospho-Asp-tRNA(Asn) or phospho-Glu-tRNA(Gln). This chain is Aspartyl/glutamyl-tRNA(Asn/Gln) amidotransferase subunit C, found in Acidothermus cellulolyticus (strain ATCC 43068 / DSM 8971 / 11B).